Consider the following 361-residue polypeptide: MNGSRAWRLAAWLLLCLSCSAAVARKDSCETCTKLVERFHKGLENTAKKNFGGGNTAWEEKTLSKYESSEIRLVEIIENICDSSDFECNHMVEEHEEQIEKWWFKMKQKYPDLLKWFCIEAIKVCCPSGSYGPDCLACLGGSERPCHGNGFCSGDGTRSGDGSCRCKAEYTGSFCLECSDGYYSSERNDTHAVCIACNQACKTCNGPSNEDCKECNNGWVKDDGKCVDLNECASEESPCKDSQYCLNTEGSFLCKECDGSCSGCSGEGPESCKDCATGFVMLSGKCTDVDECDASEKLCLRENEVCLNTAGSYKCTCSEGFEDKEGNCVKIMETENPEITEGETGTPASDTNILNTAHEDL.

The first 24 residues, Met-1–Ala-24, serve as a signal peptide directing secretion. Residues Asp-134–Leu-176 form the EGF-like 1 domain. 3 disulfide bridges follow: Cys-138/Cys-152, Cys-146/Cys-164, and Cys-166/Cys-175. The N-linked (GlcNAc...) asparagine glycan is linked to Asn-188. FU repeat units lie at residues His-191–Pro-238 and Ser-251–Leu-298. Positions Asp-288 to Val-329 constitute an EGF-like 2; calcium-binding domain. Intrachain disulfides connect Cys-292–Cys-306, Cys-299–Cys-315, and Cys-317–Cys-328. The tract at residues Ile-339 to Leu-361 is disordered. The span at Thr-346–Asn-355 shows a compositional bias: polar residues.

Belongs to the CRELD family.

The protein localises to the secreted. The protein resides in the endoplasmic reticulum. Functionally, possible role in neuronal acetylcholine receptor transport. The chain is Cysteine-rich with EGF-like domain protein 2-B (creld2-b) from Xenopus laevis (African clawed frog).